Here is a 645-residue protein sequence, read N- to C-terminus: uncharacterized protein (645 aa).

It belongs to the mycobacterial PPE family.

This is an uncharacterized protein from Mycobacterium tuberculosis (strain CDC 1551 / Oshkosh).